The sequence spans 130 residues: Small ribosomal subunit protein uS9 (130 aa).

It belongs to the universal ribosomal protein uS9 family.

The polypeptide is Small ribosomal subunit protein uS9 (Lawsonia intracellularis (strain PHE/MN1-00)).